Here is a 444-residue protein sequence, read N- to C-terminus: Methylenetetrahydrofolate--tRNA-(uracil-5-)-methyltransferase TrmFO (444 aa).

10–15 contacts FAD; that stretch reads GAGLAG.

This sequence belongs to the MnmG family. TrmFO subfamily. The cofactor is FAD.

It is found in the cytoplasm. The catalysed reaction is uridine(54) in tRNA + (6R)-5,10-methylene-5,6,7,8-tetrahydrofolate + NADH + H(+) = 5-methyluridine(54) in tRNA + (6S)-5,6,7,8-tetrahydrofolate + NAD(+). It catalyses the reaction uridine(54) in tRNA + (6R)-5,10-methylene-5,6,7,8-tetrahydrofolate + NADPH + H(+) = 5-methyluridine(54) in tRNA + (6S)-5,6,7,8-tetrahydrofolate + NADP(+). Catalyzes the folate-dependent formation of 5-methyl-uridine at position 54 (M-5-U54) in all tRNAs. The chain is Methylenetetrahydrofolate--tRNA-(uracil-5-)-methyltransferase TrmFO from Streptococcus suis (strain 98HAH33).